A 357-amino-acid chain; its full sequence is Fructose-1,6-bisphosphatase class 1 3 (357 aa).

Positions 94, 116, 118, and 119 each coordinate Mg(2+). Substrate is bound by residues 119 to 122 (DGSS) and Asn-211. Residue Glu-283 participates in Mg(2+) binding.

Belongs to the FBPase class 1 family. As to quaternary structure, homotetramer. It depends on Mg(2+) as a cofactor.

The protein localises to the cytoplasm. It carries out the reaction beta-D-fructose 1,6-bisphosphate + H2O = beta-D-fructose 6-phosphate + phosphate. Its pathway is carbohydrate biosynthesis; Calvin cycle. The sequence is that of Fructose-1,6-bisphosphatase class 1 3 from Methylibium petroleiphilum (strain ATCC BAA-1232 / LMG 22953 / PM1).